Here is a 182-residue protein sequence, read N- to C-terminus: ATP synthase subunit delta (182 aa).

It belongs to the ATPase delta chain family. As to quaternary structure, F-type ATPases have 2 components, F(1) - the catalytic core - and F(0) - the membrane proton channel. F(1) has five subunits: alpha(3), beta(3), gamma(1), delta(1), epsilon(1). CF(0) has four main subunits: a(1), b(1), b'(1) and c(10-14). The alpha and beta chains form an alternating ring which encloses part of the gamma chain. F(1) is attached to F(0) by a central stalk formed by the gamma and epsilon chains, while a peripheral stalk is formed by the delta, b and b' chains.

Its subcellular location is the cellular thylakoid membrane. Its function is as follows. F(1)F(0) ATP synthase produces ATP from ADP in the presence of a proton or sodium gradient. F-type ATPases consist of two structural domains, F(1) containing the extramembraneous catalytic core and F(0) containing the membrane proton channel, linked together by a central stalk and a peripheral stalk. During catalysis, ATP synthesis in the catalytic domain of F(1) is coupled via a rotary mechanism of the central stalk subunits to proton translocation. Functionally, this protein is part of the stalk that links CF(0) to CF(1). It either transmits conformational changes from CF(0) to CF(1) or is implicated in proton conduction. The chain is ATP synthase subunit delta from Prochlorococcus marinus (strain NATL2A).